Reading from the N-terminus, the 323-residue chain is Cytosolic sulfotransferase 5 (323 aa).

3'-phosphoadenylyl sulfate is bound at residue 69–74; that stretch reads KCGTTW. H135 serves as the catalytic Proton acceptor. 3'-phosphoadenylyl sulfate contacts are provided by residues R157, S165, and 289–291; that span reads RKG.

It belongs to the sulfotransferase 1 family. In terms of tissue distribution, expressed in inflorescence stems, roots and siliques.

The protein localises to the cytoplasm. Sulfotransferase that utilizes 3'-phospho-5'-adenylyl sulfate (PAPS) as sulfonate donor to specifically catalyze the sulfate conjugation of flavones and flavonols. Strictly specific for the position 7. Substrate preference is kaempferol 3-sulfate &gt; isorhamnetin &gt; kaempferol. This is Cytosolic sulfotransferase 5 (SOT5) from Arabidopsis thaliana (Mouse-ear cress).